Reading from the N-terminus, the 370-residue chain is Type II restriction enzyme MjaII (370 aa).

The protein belongs to the TdeIII type II restriction endonuclease family.

It carries out the reaction Endonucleolytic cleavage of DNA to give specific double-stranded fragments with terminal 5'-phosphates.. In terms of biological role, a P subtype restriction enzyme that recognizes the double-stranded sequence 5'-GGNCC-3'; the cleavage site is unknown. The protein is Type II restriction enzyme MjaII (mjaIIR) of Methanocaldococcus jannaschii (strain ATCC 43067 / DSM 2661 / JAL-1 / JCM 10045 / NBRC 100440) (Methanococcus jannaschii).